The chain runs to 343 residues: Cell division protein ZipA (343 aa).

Over 1-4 the chain is Periplasmic; it reads MDLN. A helical transmembrane segment spans residues 5-25; the sequence is TILIILGILALIGLVAHGIWS. Over 26–343 the chain is Cytoplasmic; that stretch reads NRREKSQYFD…MAEAAYLARV (318 aa). The tract at residues 39 to 98 is disordered; that stretch reads AFHRNPQSTGRPSAQASQPMTPNFAQPAKETEQIRQTYQEPQVRQMSSSPEQQTRPTAQA. Composition is skewed to polar residues over residues 43–62 and 72–95; these read NPQSTGRPSAQASQPMTPNF and IRQTYQEPQVRQMSSSPEQQTRPT.

This sequence belongs to the ZipA family. In terms of assembly, interacts with FtsZ via their C-terminal domains.

The protein localises to the cell inner membrane. Essential cell division protein that stabilizes the FtsZ protofilaments by cross-linking them and that serves as a cytoplasmic membrane anchor for the Z ring. Also required for the recruitment to the septal ring of downstream cell division proteins. The chain is Cell division protein ZipA from Actinobacillus succinogenes (strain ATCC 55618 / DSM 22257 / CCUG 43843 / 130Z).